We begin with the raw amino-acid sequence, 485 residues long: NADH-quinone oxidoreductase subunit N (485 aa).

14 helical membrane-spanning segments follow: residues 8–28 (LIALLPLLIVGLTVVVVMLSI), 35–55 (FLNATLSVIGLNAALVSLWFV), 71–91 (GFAMLYTGLVLLASLATCTFA), 105–125 (FYLLVLIASLGGILLANANHL), 127–147 (ALFLGIELISLPLFGLIGYAF), 159–179 (YTILSAAASSFLLFGMALVYA), 203–223 (LLAGFGLMIVGLGFKLSLAPF), 235–255 (PAPVSTFLATASKIAIFGVVM), 271–291 (VVLGIIAFASIIFGNLMALSQ), 297–317 (LLGYSSISHLGYLLVALIALQ), 326–346 (VGVYLAGYLFSSLGAFGVVSL), 373–393 (AAVMTVMMLSLAGIPMTLGFI), 408–430 (WWLVAAVVVGSAIGLYYYLRVAV), and 455–475 (IVVLISALLVLVLGVWPQPLI).

It belongs to the complex I subunit 2 family. In terms of assembly, NDH-1 is composed of 13 different subunits. Subunits NuoA, H, J, K, L, M, N constitute the membrane sector of the complex.

Its subcellular location is the cell inner membrane. It carries out the reaction a quinone + NADH + 5 H(+)(in) = a quinol + NAD(+) + 4 H(+)(out). Functionally, NDH-1 shuttles electrons from NADH, via FMN and iron-sulfur (Fe-S) centers, to quinones in the respiratory chain. The immediate electron acceptor for the enzyme in this species is believed to be ubiquinone. Couples the redox reaction to proton translocation (for every two electrons transferred, four hydrogen ions are translocated across the cytoplasmic membrane), and thus conserves the redox energy in a proton gradient. This Salmonella paratyphi C (strain RKS4594) protein is NADH-quinone oxidoreductase subunit N.